A 443-amino-acid polypeptide reads, in one-letter code: CBL-interacting protein kinase 2 (443 aa).

In terms of domain architecture, Protein kinase spans 13-267 (YEMGKLLGQG…MDKIMENPWF (255 aa)). ATP contacts are provided by residues 19 to 27 (LGQGTFAKV) and K42. Residue D135 is the Proton acceptor of the active site. The activation loop stretch occupies residues 153–182 (DFGLSALADCKRQDGLLHTTCGTPAYVAPE). Residues 302-329 (TLEKKPSNLNAFDIISLSTGLDLSGMFE) enclose the NAF domain. Positions 333-362 (KKESKFTSTSTASTIISKIEDIAKGLRLKL) are PPI.

The protein belongs to the protein kinase superfamily. CAMK Ser/Thr protein kinase family. SNF1 subfamily. It depends on Mn(2+) as a cofactor.

The enzyme catalyses L-seryl-[protein] + ATP = O-phospho-L-seryl-[protein] + ADP + H(+). The catalysed reaction is L-threonyl-[protein] + ATP = O-phospho-L-threonyl-[protein] + ADP + H(+). Functionally, CIPK serine-threonine protein kinases interact with CBL proteins. Binding of a CBL protein to the regulatory NAF domain of CIPK protein lead to the activation of the kinase in a calcium-dependent manner. In Oryza sativa subsp. japonica (Rice), this protein is CBL-interacting protein kinase 2 (CIPK2).